Here is a 239-residue protein sequence, read N- to C-terminus: Phosphoribosylaminoimidazole-succinocarboxamide synthase (239 aa).

This sequence belongs to the SAICAR synthetase family.

The catalysed reaction is 5-amino-1-(5-phospho-D-ribosyl)imidazole-4-carboxylate + L-aspartate + ATP = (2S)-2-[5-amino-1-(5-phospho-beta-D-ribosyl)imidazole-4-carboxamido]succinate + ADP + phosphate + 2 H(+). Its pathway is purine metabolism; IMP biosynthesis via de novo pathway; 5-amino-1-(5-phospho-D-ribosyl)imidazole-4-carboxamide from 5-amino-1-(5-phospho-D-ribosyl)imidazole-4-carboxylate: step 1/2. This Chlorobium luteolum (strain DSM 273 / BCRC 81028 / 2530) (Pelodictyon luteolum) protein is Phosphoribosylaminoimidazole-succinocarboxamide synthase.